Reading from the N-terminus, the 218-residue chain is Small ribosomal subunit protein uS5 (218 aa).

The span at Met-1–Gly-10 shows a compositional bias: polar residues. Residues Met-1 to Gln-63 form a disordered region. Low complexity predominate over residues Gln-11–Gly-25. Positions Gly-31–Gln-63 are enriched in basic and acidic residues. The S5 DRBM domain maps to Trp-62–Val-125.

This sequence belongs to the universal ribosomal protein uS5 family. In terms of assembly, part of the 30S ribosomal subunit. Contacts proteins S4 and S8.

In terms of biological role, with S4 and S12 plays an important role in translational accuracy. Its function is as follows. Located at the back of the 30S subunit body where it stabilizes the conformation of the head with respect to the body. The protein is Small ribosomal subunit protein uS5 of Synechococcus sp. (strain RCC307).